The primary structure comprises 489 residues: MKTVILLTFLWGLSCALPVARYQNTESESSEERTGNLAQSPPPPMANSDHTDSSESGEELGSDRSQYRPAGGLSKSAGMDADKEEDEDDSGDDTFGDEDNGPGPEERQWGGPSRLDSDEDSADTTQSSEDSTSQENSAQDTPSDSKDHHSDEADSRPEAGDSTQDSESEEYRVGGGSEGESSHGDGSEFDDEGMQSDDPGSTRSDRGHTRMSSAGIRSEESKGDHEPTSTQDSDDSQDVEFSSRKSFRRSRVSEEDDRGELADSNSRETQSVSTEDFRSKEESRSETQEDTAETQSQEDSPEGQDPSSESSEEAGEPSQESSSESQEGVASESRGDNPDNTSQTGDQRDSESSEEDRLNTFSSSESQSTEEQGDSESNESLSLSEESQESAQDEDSSSQEGLQSQSASRESRSQESQSEQDSRSEENRDSDSQDSSRSKEESNSTGSTSSSEEDNHPKNIEADNRKLIVDAYHNKPIGDQDDNDCQDGY.

Positions 1–16 (MKTVILLTFLWGLSCA) are cleaved as a signal peptide. The disordered stretch occupies residues 22-489 (YQNTESESSE…QDDNDCQDGY (468 aa)). Acidic residues predominate over residues 82 to 100 (DKEEDEDDSGDDTFGDEDN). Residues 123 to 138 (DTTQSSEDSTSQENSA) are compositionally biased toward low complexity. 2 stretches are compositionally biased toward basic and acidic residues: residues 143–159 (SDSK…RPEA) and 217–227 (RSEESKGDHEP). Positions 263–274 (DSNSRETQSVST) are enriched in polar residues. The span at 275–287 (EDFRSKEESRSET) shows a compositional bias: basic and acidic residues. Over residues 316 to 332 (EPSQESSSESQEGVASE) the composition is skewed to low complexity. A Cell attachment site motif is present at residues 334 to 336 (RGD). A glycan (N-linked (GlcNAc...) asparagine) is linked at asparagine 340. The span at 346 to 358 (DQRDSESSEEDRL) shows a compositional bias: basic and acidic residues. N-linked (GlcNAc...) asparagine glycosylation occurs at asparagine 378. A compositionally biased stretch (acidic residues) spans 386–397 (ESQESAQDEDSS). Over residues 398–419 (SQEGLQSQSASRESRSQESQSE) the composition is skewed to low complexity. Positions 420-442 (QDSRSEENRDSDSQDSSRSKEES) are enriched in basic and acidic residues. A glycan (N-linked (GlcNAc...) asparagine) is linked at asparagine 443. A compositionally biased stretch (basic and acidic residues) spans 453 to 478 (EDNHPKNIEADNRKLIVDAYHNKPIG). Acidic residues predominate over residues 479 to 489 (DQDDNDCQDGY).

In terms of assembly, interacts with importin alpha. In terms of processing, phosphorylated in the cytosol and extracellular matrix and unphosphorylated in the nucleus. Phosphorylation is necessary for nucleocytoplasmic transport and may be catalyzed by a nuclear isoform of CK2 and can be augmented by calcium. Phosphorylated (in vitro) by FAM20C in the extracellular medium at sites within the S-x-E/pS motif. In terms of tissue distribution, expressed in tooth particularly in odontoblast and ameloblast.

It is found in the nucleus. The protein localises to the cytoplasm. The protein resides in the secreted. It localises to the extracellular space. Its subcellular location is the extracellular matrix. In terms of biological role, may have a dual function during osteoblast differentiation. In the nucleus of undifferentiated osteoblasts, unphosphorylated form acts as a transcriptional component for activation of osteoblast-specific genes like osteocalcin. During the osteoblast to osteocyte transition phase it is phosphorylated and exported into the extracellular matrix, where it regulates nucleation of hydroxyapatite. The protein is Dentin matrix acidic phosphoprotein 1 (Dmp1) of Rattus norvegicus (Rat).